We begin with the raw amino-acid sequence, 378 residues long: Probable pectin lyase A (378 aa).

An N-terminal signal peptide occupies residues 1–18 (MKYQDLLAIAGCIANAGA). 2 disulfide bridges follow: C81/C100 and C90/C224. N127 carries an N-linked (GlcNAc...) asparagine glycan. Residue R254 is part of the active site. The cysteines at positions 321 and 329 are disulfide-linked.

This sequence belongs to the polysaccharide lyase 1 family.

It is found in the secreted. It carries out the reaction Eliminative cleavage of (1-&gt;4)-alpha-D-galacturonan methyl ester to give oligosaccharides with 4-deoxy-6-O-methyl-alpha-D-galact-4-enuronosyl groups at their non-reducing ends.. In terms of biological role, pectinolytic enzymes consist of four classes of enzymes: pectin lyase, polygalacturonase, pectin methylesterase and rhamnogalacturonase. Among pectinolytic enzymes, pectin lyase is the most important in depolymerization of pectin, since it cleaves internal glycosidic bonds of highly methylated pectins. The chain is Probable pectin lyase A (pelA) from Aspergillus fumigatus (strain CBS 144.89 / FGSC A1163 / CEA10) (Neosartorya fumigata).